Consider the following 124-residue polypeptide: Large ribosomal subunit protein uL29 (124 aa).

The protein belongs to the universal ribosomal protein uL29 family.

The polypeptide is Large ribosomal subunit protein uL29 (RPL35) (Triticum aestivum (Wheat)).